The primary structure comprises 453 residues: 3-phosphoshikimate 1-carboxyvinyltransferase (453 aa).

The tract at residues 1–25 is disordered; it reads MSHDSEPQPVTAHPAGPLTGALKPP. Positions 28, 29, and 33 each coordinate 3-phosphoshikimate. Lysine 28 is a binding site for phosphoenolpyruvate. Phosphoenolpyruvate-binding residues include glycine 101 and arginine 129. 3-phosphoshikimate-binding residues include serine 175, glutamine 177, aspartate 330, and lysine 357. Glutamine 177 serves as a coordination point for phosphoenolpyruvate. Catalysis depends on aspartate 330, which acts as the Proton acceptor. 2 residues coordinate phosphoenolpyruvate: arginine 361 and arginine 405.

The protein belongs to the EPSP synthase family. As to quaternary structure, monomer.

The protein resides in the cytoplasm. It carries out the reaction 3-phosphoshikimate + phosphoenolpyruvate = 5-O-(1-carboxyvinyl)-3-phosphoshikimate + phosphate. Its pathway is metabolic intermediate biosynthesis; chorismate biosynthesis; chorismate from D-erythrose 4-phosphate and phosphoenolpyruvate: step 6/7. Functionally, catalyzes the transfer of the enolpyruvyl moiety of phosphoenolpyruvate (PEP) to the 5-hydroxyl of shikimate-3-phosphate (S3P) to produce enolpyruvyl shikimate-3-phosphate and inorganic phosphate. In Methylorubrum populi (strain ATCC BAA-705 / NCIMB 13946 / BJ001) (Methylobacterium populi), this protein is 3-phosphoshikimate 1-carboxyvinyltransferase.